Consider the following 209-residue polypeptide: Ribosomal RNA large subunit methyltransferase E (209 aa).

S-adenosyl-L-methionine is bound by residues G63, W65, D83, D99, and D124. The active-site Proton acceptor is K164.

This sequence belongs to the class I-like SAM-binding methyltransferase superfamily. RNA methyltransferase RlmE family.

The protein resides in the cytoplasm. The catalysed reaction is uridine(2552) in 23S rRNA + S-adenosyl-L-methionine = 2'-O-methyluridine(2552) in 23S rRNA + S-adenosyl-L-homocysteine + H(+). Specifically methylates the uridine in position 2552 of 23S rRNA at the 2'-O position of the ribose in the fully assembled 50S ribosomal subunit. This is Ribosomal RNA large subunit methyltransferase E from Aeromonas hydrophila subsp. hydrophila (strain ATCC 7966 / DSM 30187 / BCRC 13018 / CCUG 14551 / JCM 1027 / KCTC 2358 / NCIMB 9240 / NCTC 8049).